We begin with the raw amino-acid sequence, 475 residues long: MASRIGLRMQLMREQAQQEEQRERMQQQAVMHYMQQQQQQQQQLGGPPTPAINTPVHFQSPPPVPGEVLKVQSYLENPTSYHLQQSQHQKVREYLSETYGNKFAAHVSPAQGSPKPAPAASPGVRAGHVLSTSAGNSAPNSPMAMLHISSNPEKEFDDVIDNIMRLDSVLGYINPEMQMPNTLPLSSSHLNVYSGDPQVTASMVGVTSSSCPADLTQKRELTDAESRALAKERQKKDNHNLIERRRRFNINDRIKELGMLIPKANDLDVRWNKGTILKASVDYIRRMQKDLQKSRELENHSRRLEMTNKQLWLRIQELEMQARVHGLPTTSPSGVNMAELAQQVVKQELPSEDGPGEALMLGPEVPEPEQMPALPPQAPLPSAAQPQSPFHHLDFSHGLSFGGGGDEGPTGYPDTLGTEHGSPFPNLSKKDLDLMLLDDSLLPLASDPLFSTMSPEASKASSRRSSFSMEEGDVL.

The interval 1–52 (MASRIGLRMQLMREQAQQEEQRERMQQQAVMHYMQQQQQQQQQLGGPPTPAI) is disordered. The interaction with ACSS2 stretch occupies residues 1 to 166 (MASRIGLRMQ…DDVIDNIMRL (166 aa)). Over residues 26 to 43 (QQQAVMHYMQQQQQQQQQ) the composition is skewed to low complexity. Ser-108, Ser-113, Ser-121, and Ser-137 each carry phosphoserine. The short motif at 135–152 (GNSAPNSPMAMLHISSNP) is the Nuclear export signal element. Position 141 is a phosphoserine; by MTOR (Ser-141). A strong transcription activation domain region spans residues 155-164 (EFDDVIDNIM). Residue Thr-182 is modified to Phosphothreonine. Ser-210 carries the post-translational modification Phosphoserine; by MTOR. S-(2,3-dicarboxypropyl)cysteine is present on Cys-211. Residues 234–287 (QKKDNHNLIERRRRFNINDRIKELGMLIPKANDLDVRWNKGTILKASVDYIRRM) form the bHLH domain. Positions 244-247 (RRRR) match the Nuclear localization signal motif. The interval 297–318 (LENHSRRLEMTNKQLWLRIQEL) is leucine-zipper. The residue at position 331 (Ser-331) is a Phosphoserine. Residues 351–429 (SEDGPGEALM…HGSPFPNLSK (79 aa)) form a disordered region. Residues 380–389 (LPSAAQPQSP) are compositionally biased toward low complexity. 5 positions are modified to phosphoserine: Ser-422, Ser-440, Ser-465, Ser-466, and Ser-468. A compositionally biased stretch (low complexity) spans 445 to 468 (ASDPLFSTMSPEASKASSRRSSFS). The disordered stretch occupies residues 445–475 (ASDPLFSTMSPEASKASSRRSSFSMEEGDVL).

The protein belongs to the MiT/TFE family. Homodimer and heterodimer; with TFE3 or MITF. Interacts (when phosphorylated by MTOR) with YWHAZ; promoting retention in the cytosol. Interacts with Irgm1; promoting association between TFEB and PPP3CB and dephosphorylation. Interacts with small GTPases Rag (RagA/RRAGA, RagB/RRAGB, RagC/RRAGC and/or RagD/RRAGD); promoting its recruitment to lysosomal membrane in the presence of nutrients. Interacts with ACSS2. In terms of processing, phosphorylation at Ser-210 by MTOR via non-canonical mTORC1 pathway regulates its subcellular location and activity. When nutrients are present, phosphorylation by MTOR promotes association with 14-3-3/YWHA adapters and retention in the cytosol. Inhibition of mTORC1, starvation and lysosomal disruption, promotes dephosphorylation by calcineurin PPP3CB and translocation to the nucleus. Dephosphorylated by calcineurin PPP3CB in response to lysosomal Ca(2+) release. Irgm1 promotes dephosphorylation by calcineurin PPP3CB, resulting in TFEB nuclear translocation and stimulation of lysosomal biogenesis. Exported from the nucleus in a mTORC1-dependent manner in response to nutrient availability. Alkylated via a non-enzymatic covalent modification. Itaconate, an anti-inflammatory metabolite generated in response to lipopolysaccharide, alkylates Cys-211, preventing association with 14-3-3/YWHA adapters, thereby promoting nuclear translocation and activity. Post-translationally, sumoylated; does not affect dimerization with MITF. As to expression, widely expressed.

It is found in the nucleus. Its subcellular location is the cytoplasm. The protein localises to the cytosol. It localises to the lysosome membrane. Transcription factor that acts as a master regulator of lysosomal biogenesis, autophagy, lysosomal exocytosis, lipid catabolism, energy metabolism and immune response. Specifically recognizes and binds E-box sequences (5'-CANNTG-3'); efficient DNA-binding requires dimerization with itself or with another MiT/TFE family member such as TFE3 or MITF. Involved in the cellular response to amino acid availability by acting downstream of MTOR: in the presence of nutrients, TFEB phosphorylation by MTOR promotes its cytosolic retention and subsequent inactivation. Upon starvation or lysosomal stress, inhibition of MTOR induces TFEB dephosphorylation, resulting in nuclear localization and transcription factor activity. Specifically recognizes and binds the CLEAR-box sequence (5'-GTCACGTGAC-3') present in the regulatory region of many lysosomal genes, leading to activate their expression, thereby playing a central role in expression of lysosomal genes. Regulates lysosomal positioning in response to nutrient deprivation by promoting the expression of PIP4P1. Acts as a positive regulator of autophagy by promoting expression of genes involved in autophagy. In association with TFE3, activates the expression of CD40L in T-cells, thereby playing a role in T-cell-dependent antibody responses in activated CD4(+) T-cells and thymus-dependent humoral immunity. Specifically recognizes the gamma-E3 box, a subset of E-boxes, present in the heavy-chain immunoglobulin enhancer. Plays a role in the signal transduction processes required for normal vascularization of the placenta. Involved in the immune response to infection by the bacteria S.aureus, S.typhimurium or S.enterica. Infection promotes itaconate production, leading to alkylation, resulting in nuclear localization and transcription factor activity. Itaconate-mediated alkylation activates TFEB-dependent lysosomal biogenesis, facilitating the bacteria clearance during the antibacterial innate immune response. In association with ACSS2, promotes the expression of genes involved in lysosome biogenesis and both autophagy upon glucose deprivation. This Mus musculus (Mouse) protein is Transcription factor EB.